We begin with the raw amino-acid sequence, 1052 residues long: METPTGSGRPSRMATPRLSERKRQLFGSPRSRLRQINDDEDDADVDSLGVLPLKTHVAANRKGRSLFAAVPGKSSSSANSSPETNKENKKTRGGVMTATAEQLPQLFTATMRLNSNSSSNSRNSSPRQTRVQRKRADSSMSSPTSSSEGTPSSRARNSIRRSPRTFSAQKDPDAFSSPESFQTRLSKVAAMLMKGQDSRSMLEKSKKKHNHSLKTTAQVHTTKPKKTSPAEESQSDDEKPSSSKNSRKNTEVRETRSSQIISPKTRNRRRPFTSADINCKTLKAAAHLHENMRSYDEEKTAAVKLENSRSRSKSPVEVFKSNDDAVKRNTGNTNNKTAKSSEVATAKRPESPGSSMKIDVEVPESDEEASNHKPQKRQHPETSTPVAPSADADSGSPQSKMRKVTLSSSIPTMAFYSHSGEAVTKSRRRPSISKNSLKQPTKISPTSRPLLGINKGVHHKIRKRHGFANRLPATDMDNILNSLSNERLKNLITTKREERAKVEEVHQILRNAKDPIKMAKPLSVIEADDANNNNNLPATAWQETSADFSDLSDVEDIDPIIEVEPIIPIIRHEPVQKSPTAEPADLSKRKFFKSGRRSSTCMEVRITDNIRASVSQGKIELVQTIRRKPRQVRVKSATIFSAEQATVDAILKNLDDTVVDEIVEANPVVQATPIDAEETTMETESLPDIIEYAPEANDVEIDPFAEFRQRLPYQTDDPNVVEQQQILLEFLISNNICTEKNFEIFIANPDDYKDEANQIVDNLYMVVNSEEAAQLAQMETVENTAVAIAPKQDAPAVEEVQPKLFPIFTQRLQPVVQKSLRRRPDTSMRLLTAAGGSNQYQIDAGQKAFGARQCQQCGLVYTVHEPEEELLHREYHNSIHVLRFKGWIDEDIVSVYPEWASDGRIIRINERAPTARLDRLRDLIGVVDKELGYSSYIVPKIFVAFIAVRKQQIVGFCLVQPLSQAHRFIQVDGTDYFSEESYPASCGVSRIWVSPLQRRSGIASKLLRVVQCHTVLGQEIARECIAFSTPTDDGRALARQFTGLDNFLTYDQ.

Disordered regions lie at residues 1-45 (METP…DADV), 61-277 (RKGR…SADI), 290-405 (ENMR…RKVT), and 419-452 (SGEA…PLLG). The segment covering 99-113 (TAEQLPQLFTATMRL) has biased composition (polar residues). 2 stretches are compositionally biased toward low complexity: residues 114-125 (NSNSSSNSRNSS) and 138-153 (SSMS…TPSS). Phosphoserine occurs at positions 176 and 177. The span at 290–309 (ENMRSYDEEKTAAVKLENSR) shows a compositional bias: basic and acidic residues. A phosphoserine mark is found at serine 310, serine 312, and serine 314. Polar residues-rich tracts occupy residues 329-343 (NTGN…SSEV), 395-405 (GSPQSKMRKVT), and 432-447 (ISKN…SPTS). The CCHH-type zinc-finger motif lies at 852–876 (RQCQQCGLVYTVHEPEEELLHREYH). The region spanning 906–1052 (IRINERAPTA…GLDNFLTYDQ (147 aa)) is the N-acetyltransferase domain.

The protein belongs to the acetyltransferase family. ECO subfamily.

The protein localises to the nucleus. In terms of biological role, acetyltransferase required for the establishment of sister chromatid cohesion and couple the processes of cohesion and DNA replication to ensure that only sister chromatids become paired together. In contrast to the structural cohesins, the deposition and establishment factors are required only during S phase. The polypeptide is N-acetyltransferase eco (eco) (Drosophila melanogaster (Fruit fly)).